Reading from the N-terminus, the 541-residue chain is Cytosolic phospholipase A2 gamma (541 aa).

Residues 1–541 form the PLA2c domain; it reads MGSSEVSIIP…KDSARSCCLA (541 aa). Residue serine 82 is the Nucleophile of the active site. The interval 260-292 is required for lipid droplet localization; sequence LTLKGLWRRAVANAKSIGHLIFARLLRLQESSQ. The residue at position 337 (serine 337) is a Phosphoserine. Aspartate 385 serves as the catalytic Proton acceptor. Cysteine 538 carries the post-translational modification Cysteine methyl ester. Cysteine 538 carries S-farnesyl cysteine lipidation. Positions 539-541 are cleaved as a propeptide — removed in mature form; the sequence is CLA.

As to quaternary structure, (Microbial infection) Interacts with HCV non-structural protein 4B/NS4B; this interaction likely initiates the recruitment of replication complexes to lipid droplets. In terms of tissue distribution, highly expressed in heart and skeletal muscle.

The protein localises to the cell membrane. It localises to the endoplasmic reticulum membrane. It is found in the mitochondrion membrane. The protein resides in the lipid droplet. It catalyses the reaction a 1,2-diacyl-sn-glycero-3-phosphocholine + H2O = a 1-acyl-sn-glycero-3-phosphocholine + a fatty acid + H(+). The enzyme catalyses a 1-O-alkyl-2-acyl-sn-glycero-3-phosphocholine + H2O = a 1-O-alkyl-sn-glycero-3-phosphocholine + a fatty acid + H(+). It carries out the reaction 1,2-dihexadecanoyl-sn-glycero-3-phosphocholine + H2O = 1-hexadecanoyl-sn-glycero-3-phosphocholine + hexadecanoate + H(+). The catalysed reaction is 1-hexadecanoyl-2-(9Z-octadecenoyl)-sn-glycero-3-phosphocholine + H2O = 1-hexadecanoyl-sn-glycero-3-phosphocholine + (9Z)-octadecenoate + H(+). It catalyses the reaction 1-hexadecanoyl-2-(9Z,12Z-octadecadienoyl)-sn-glycero-3-phosphocholine + H2O = (9Z,12Z)-octadecadienoate + 1-hexadecanoyl-sn-glycero-3-phosphocholine + H(+). The enzyme catalyses 1-hexadecanoyl-2-(5Z,8Z,11Z,14Z-eicosatetraenoyl)-sn-glycero-3-phosphocholine + H2O = 1-hexadecanoyl-sn-glycero-3-phosphocholine + (5Z,8Z,11Z,14Z)-eicosatetraenoate + H(+). It carries out the reaction 1-O-hexadecyl-2-(5Z,8Z,11Z,14Z)-eicosatetraenoyl-sn-glycero-3-phosphocholine + H2O = 1-O-hexadecyl-sn-glycero-3-phosphocholine + (5Z,8Z,11Z,14Z)-eicosatetraenoate + H(+). The catalysed reaction is 1-hexadecanoyl-2-(5Z,8Z,11Z,14Z-eicosatetraenoyl)-sn-glycero-3-phosphocholine + H2O = 2-(5Z,8Z,11Z,14Z)-eicosatetraenoyl-sn-glycero-3-phosphocholine + hexadecanoate + H(+). It catalyses the reaction a 1-acyl-sn-glycero-3-phosphocholine + H2O = sn-glycerol 3-phosphocholine + a fatty acid + H(+). The enzyme catalyses 1-hexadecanoyl-sn-glycero-3-phosphocholine + H2O = sn-glycerol 3-phosphocholine + hexadecanoate + H(+). It carries out the reaction 2 1-hexadecanoyl-sn-glycero-3-phosphocholine = 1,2-dihexadecanoyl-sn-glycero-3-phosphocholine + sn-glycerol 3-phosphocholine. The catalysed reaction is 1-hexadecanoyl-sn-glycero-3-phosphoethanolamine + 1-hexadecanoyl-sn-glycero-3-phosphocholine = 1,2-dihexadecanoyl-sn-glycero-3-phosphoethanolamine + sn-glycerol 3-phosphocholine. It catalyses the reaction 1-hexadecanoyl-sn-glycero-3-phosphoethanolamine + 1-hexadecanoyl-sn-glycero-3-phosphocholine = sn-glycero-3-phosphoethanolamine + 1,2-dihexadecanoyl-sn-glycero-3-phosphocholine. The enzyme catalyses 2 1-hexadecanoyl-sn-glycero-3-phosphoethanolamine = 1,2-dihexadecanoyl-sn-glycero-3-phosphoethanolamine + sn-glycero-3-phosphoethanolamine. It carries out the reaction 1-O-hexadecyl-sn-glycero-3-phosphocholine + 1-hexadecanoyl-sn-glycero-3-phosphocholine = 1-O-hexadecyl-2-hexadecanoyl-sn-glycero-3-phosphocholine + sn-glycerol 3-phosphocholine. The catalysed reaction is a 1-O-(1Z-alkenyl)-sn-glycero-3-phosphoethanolamine + 1-hexadecanoyl-sn-glycero-3-phosphocholine = 1-O-(1Z)-alkenyl-2-hexadecanoyl-sn-glycero-3-phosphoethanolamine + sn-glycerol 3-phosphocholine. It catalyses the reaction 1-O-hexadecyl-sn-glycero-3-phosphocholine + 1-hexadecanoyl-sn-glycero-3-phosphoethanolamine = 1-O-hexadecyl-2-hexadecanoyl-sn-glycero-3-phosphocholine + sn-glycero-3-phosphoethanolamine. The enzyme catalyses 1-octadecanoyl-2-(5Z,8Z,11Z,14Z)-eicosatetraenoyl-sn-glycero-3-phosphoethanolamine + 1-hexadecanoyl-sn-glycero-3-phosphocholine = 1-octadecanoyl-sn-glycero-3-phosphoethanolamine + 1-hexadecanoyl-2-(5Z,8Z,11Z,14Z-eicosatetraenoyl)-sn-glycero-3-phosphocholine. It carries out the reaction 1-octadecanoyl-2-(5Z,8Z,11Z,14Z)-eicosatetraenoyl-sn-glycero-3-phosphoethanolamine + 1-O-hexadecyl-sn-glycero-3-phosphocholine = 1-octadecanoyl-sn-glycero-3-phosphoethanolamine + 1-O-hexadecyl-2-(5Z,8Z,11Z,14Z)-eicosatetraenoyl-sn-glycero-3-phosphocholine. The catalysed reaction is 1-hexadecanoyl-2-(9Z,12Z-octadecadienoyl)-sn-glycero-3-phosphocholine + a 1-O-(1Z-alkenyl)-sn-glycero-3-phosphoethanolamine = 1-O-(1Z-alkenyl)-2-(9Z,12Z-octadecadienoyl)-sn-glycero-3-phosphoethanolamine + 1-hexadecanoyl-sn-glycero-3-phosphocholine. It catalyses the reaction 1-hexadecanoyl-2-(5Z,8Z,11Z,14Z-eicosatetraenoyl)-sn-glycero-3-phosphocholine + a 1-O-(1Z-alkenyl)-sn-glycero-3-phosphoethanolamine = 1-O-(1Z)-alkenyl-2-(5Z,8Z,11Z,14Z)-eicosatetraenoyl-sn-glycero-3-phosphoethanolamine + 1-hexadecanoyl-sn-glycero-3-phosphocholine. With respect to regulation, not regulated by calcium, coenzyme A or ATP. Lysophospholipase activity is inhibited by palmitoyl-CoA. Lysophospholipase and O-acyltransferase activities are inhibited by methylarachidonoylfluorophosphonate. Lysophospholipase activity is inhibited by phosphatidate or lysophosphatidate. O-acyltransferase activity is up-regulated at low concentration (10-20 uM) of phosphatidate or lysophosphatidate, but inhibited at higher concentrations. Functionally, calcium-independent phospholipase, lysophospholipase and O-acyltransferase involved in phospholipid remodeling with implications in endoplasmic reticulum membrane homeostasis and lipid droplet biogenesis. Preferentially hydrolyzes the ester bond of the fatty acyl group attached at the sn-2 position of phospholipids with choline and ethanolamine head groups, producing lysophospholipids that are used in deacylation-reacylation cycles. Transfers the sn-1 fatty acyl from one lysophospholipid molecule to the sn-2 position of another lysophospholipid to form diacyl, alkylacyl and alkenylacyl glycerophospholipids. Cleaves ester bonds but not alkyl or alkenyl ether bonds at sn-1 position of lysophospholipids. Catalyzes sn-2 fatty acyl transfer from phospholipids to the sn-2 position of 1-O-alkyl or 1-O-alkenyl lysophospholipids with lower efficiency. In response to dietary fatty acids, may play a role in the formation of nascent lipid droplets from the endoplasmic reticulum likely by regulating the phospholipid composition of these organelles. (Microbial infection) May play a role in replication and assembly of human hepatitis C virus (HCV). In response to HCV infection, promotes remodeling of host endoplasmic reticulum membranes to form organelle-like structures called membranous web, where HCV replication occur. Can further mediate translocation of replication complexes to lipid droplets to enable virion assembly. Its function is as follows. (Microbial infection) May facilitate human T-lymphotropic virus type 1 (HTLV-1) infection by promoting leukotriene B4 (LTB4) biosynthesis. LTB4 acts as a chemoattractant for HTLV-1-infected CD4-positive T cells and favors cell to cell viral transmission. The protein is Cytosolic phospholipase A2 gamma (PLA2G4C) of Homo sapiens (Human).